The sequence spans 511 residues: 2,3-bisphosphoglycerate-independent phosphoglycerate mutase (511 aa).

D12 contributes to the Mn(2+) binding site. Residue Y36 is modified to Phosphotyrosine. S62 is a binding site for Mn(2+). Residue S62 is the Phosphoserine intermediate of the active site. Substrate-binding positions include H123, 153–154, R185, R191, 261–264, and K336; these read RD and RPDR. Residues D403, H407, D444, H445, and H462 each coordinate Mn(2+).

Belongs to the BPG-independent phosphoglycerate mutase family. As to quaternary structure, monomer. It depends on Mn(2+) as a cofactor.

The catalysed reaction is (2R)-2-phosphoglycerate = (2R)-3-phosphoglycerate. The protein operates within carbohydrate degradation; glycolysis; pyruvate from D-glyceraldehyde 3-phosphate: step 3/5. In terms of biological role, essential for rapid growth and for sporulation. Catalyzes the interconversion of 2-phosphoglycerate and 3-phosphoglycerate. The sequence is that of 2,3-bisphosphoglycerate-independent phosphoglycerate mutase from Bacillus pumilus (strain SAFR-032).